The following is a 678-amino-acid chain: F-box/LRR-repeat protein 5 (678 aa).

The tract at residues 1–159 is hemerythrin-like; that stretch reads MAPFPDEVDL…IKKKVIAQHC (159 aa). Histidine 15, histidine 57, glutamate 58, glutamate 61, histidine 80, histidine 126, and glutamate 130 together coordinate Fe(3+). Positions 202–248 constitute an F-box domain; sequence SSSISSLPPEVMLNIFTYLNPQDLCRCSQVNTEWAQLAKTGSLWRHL. The segment at 285 to 308 is disordered; sequence YQEWDEDADIDESEETGEEEDSSI. The span at 287–306 shows a compositional bias: acidic residues; it reads EWDEDADIDESEETGEEEDS. LRR repeat units lie at residues 314 to 340, 341 to 366, 367 to 392, 393 to 420, 566 to 594, 595 to 622, and 623 to 648; these read EKEL…VLAY, SSAT…DLTQ, TDIS…DLSG, CDKI…RLLK, HSDI…SLSG, CHQI…NLSG, and CLNV…HFYY. Positions 649, 663, 673, and 674 each coordinate [2Fe-2S] cluster. An LRR 8 repeat occupies 655-678; that stretch reads PHGATASGCQNLQCGFRMCCRSGE.

Part of a SCF (SKP1-cullin-F-box) protein ligase complex. Requires [2Fe-2S] cluster as cofactor. Post-translationally, ubiquitinated upon iron and oxygen depletion, leading to its degradation by the proteasome. Ubiquitination is regulated by the hemerythrin-like region that acts as an oxygen and iron sensor.

The protein resides in the cytoplasm. Its subcellular location is the perinuclear region. It localises to the nucleus. Its pathway is protein modification; protein ubiquitination. Its function is as follows. Component of some SCF (SKP1-cullin-F-box) protein ligase complex that plays a central role in iron homeostasis by promoting the ubiquitination and subsequent degradation of ireb2/irp2. Upon high iron and oxygen level, it specifically recognizes and binds ireb2/irp2, promoting its ubiquitination and degradation by the proteasome. This chain is F-box/LRR-repeat protein 5 (fbxl5), found in Xenopus laevis (African clawed frog).